Consider the following 147-residue polypeptide: Secreted hemophore CSA2 (147 aa).

A signal peptide spans 1–20 (MKFSTILAIPFAIAFANAAA). The CFEM domain maps to 34–145 (NPYTIYPPVP…SALDAAATAT (112 aa)). 4 disulfides stabilise this stretch: cysteine 62–cysteine 102, cysteine 66–cysteine 97, cysteine 76–cysteine 83, and cysteine 85–cysteine 118. A heme-binding site is contributed by aspartate 80.

This sequence belongs to the RBT5 family. Homodimer. The possibility of a transient honotrimer assembly of the holo protein is not ruled out.

It is found in the secreted. Secreted heme-binding protein involved in the utilization of iron from human hemoglobin during hyphal growth. May also play a role in non-hemoglobin iron utilization. Heme transfer occurs between PGA7, RBT5 and CSA2 supporting a model in which the 3 CFEM proteins cooperate in a heme-acquisition system and form a cross-cell wall heme-transfer cascade. The ability to acquire iron from host tissues is a major virulence factor of pathogenic microorganisms. This Candida albicans (strain SC5314 / ATCC MYA-2876) (Yeast) protein is Secreted hemophore CSA2 (CSA2).